The sequence spans 420 residues: Histidine--tRNA ligase (420 aa).

Belongs to the class-II aminoacyl-tRNA synthetase family. Homodimer.

The protein localises to the cytoplasm. It carries out the reaction tRNA(His) + L-histidine + ATP = L-histidyl-tRNA(His) + AMP + diphosphate + H(+). The chain is Histidine--tRNA ligase from Clostridioides difficile (strain 630) (Peptoclostridium difficile).